Consider the following 276-residue polypeptide: uncharacterized protein (276 aa).

In terms of domain architecture, AB hydrolase-1 spans Pro-20–Ser-137. A disordered region spans residues Gly-57 to Tyr-76.

It belongs to the AB hydrolase superfamily.

This is an uncharacterized protein from Staphylococcus aureus (strain bovine RF122 / ET3-1).